The primary structure comprises 319 residues: Ribose-phosphate pyrophosphokinase (319 aa).

ATP is bound by residues Asn41–Glu43 and Arg100–Gln101. Positions 134 and 175 each coordinate Mg(2+). Lys198 is a catalytic residue. Residues Arg200, Asp224, and Asp228 to Ser232 each bind D-ribose 5-phosphate.

It belongs to the ribose-phosphate pyrophosphokinase family. Class I subfamily. Homohexamer. Mg(2+) is required as a cofactor.

It localises to the cytoplasm. The enzyme catalyses D-ribose 5-phosphate + ATP = 5-phospho-alpha-D-ribose 1-diphosphate + AMP + H(+). It participates in metabolic intermediate biosynthesis; 5-phospho-alpha-D-ribose 1-diphosphate biosynthesis; 5-phospho-alpha-D-ribose 1-diphosphate from D-ribose 5-phosphate (route I): step 1/1. Its function is as follows. Involved in the biosynthesis of the central metabolite phospho-alpha-D-ribosyl-1-pyrophosphate (PRPP) via the transfer of pyrophosphoryl group from ATP to 1-hydroxyl of ribose-5-phosphate (Rib-5-P). This is Ribose-phosphate pyrophosphokinase from Clostridium acetobutylicum (strain ATCC 824 / DSM 792 / JCM 1419 / IAM 19013 / LMG 5710 / NBRC 13948 / NRRL B-527 / VKM B-1787 / 2291 / W).